A 158-amino-acid polypeptide reads, in one-letter code: MRQIPLVVVLLLAYAARLQGLISVTNAAVGAKPGPHAGRDLDGSTTSMSVNVDDEERGLSDMLKRLRSMLFDANSATKGQALKKDAKSTKSVKAAGAASNAKKVGQLRHMWNQIKNVEYKGNVKYLAIIYVICILSVLGILGTVFAINRNISNQYIHE.

The first 20 residues, Met-1–Gly-20, serve as a signal peptide directing secretion. Residues Arg-39–Arg-57 carry the RxLR-dEER motif. Positions Lys-120–Glu-158 are host BKI1-binding. The chain crosses the membrane as a helical span at residues Ala-127–Ile-147. A glycan (N-linked (GlcNAc...) asparagine) is linked at Asn-150.

This sequence belongs to the RxLR effector family. In terms of assembly, interacts with host BKI1.

The protein resides in the secreted. It localises to the host cell membrane. Its function is as follows. Secreted effector that suppresses pathogen-associated molecular pattern (PAMP)-triggered immunity (PTI) in host plants. Suppresses both defense-related brassinosteroid (BR) and ERECTA (ER) signaling pathways in planta by interacting with host BRI1 kinase inhibitor 1 (BKI1) at the host plasma membrane, leading to a host dwarf phenotype. In Plasmopara viticola (Downy mildew of grapevine), this protein is Secreted RxLR effector protein 131.